The following is a 655-amino-acid chain: Gastrulation defective protein 1 homolog (655 aa).

2 disordered regions span residues 1 to 54 (MQRG…EQMI) and 83 to 165 (AKVF…DEQS). Basic and acidic residues-rich tracts occupy residues 23–36 (RSNE…KEST), 91–115 (QIEK…KEDD), and 134–146 (TDKE…SSKD). The span at 147-164 (EDSDDDDYSSDEDSDDEQ) shows a compositional bias: acidic residues. 7 WD repeats span residues 180–219 (HGSR…SSMR), 227–268 (CENH…ECCK), 281–321 (GHVA…EQLQ), 330–369 (GLRT…VNTT), 377–416 (QKGS…QPLH), 422–467 (FSRY…EVQR), and 470–510 (VSNA…RGAK). 2 disordered regions span residues 544–580 (KSRT…VASS) and 633–655 (AIFS…EADK). Basic and acidic residues-rich tracts occupy residues 554 to 564 (KARMDPVKSQR) and 639 to 655 (LPAD…EADK).

The protein belongs to the WD repeat GAD-1 family.

This chain is Gastrulation defective protein 1 homolog, found in Drosophila melanogaster (Fruit fly).